The following is a 515-amino-acid chain: Signal transduction histidine-protein kinase/phosphatase MprB (515 aa).

The Cytoplasmic portion of the chain corresponds to 1-24 (MTLPPQPSRLKPPRNTSSLSLRWR). A helical membrane pass occupies residues 25–45 (VMLLAMSMVAMVVVLMSVAVY). Residues 46–165 (AVVSRALYDD…TGQVLGRLGT (120 aa)) are Extracellular-facing. A helical membrane pass occupies residues 166–186 (VLLIVGGVGVAVAAIAGGMVA). The region spanning 187 to 239 (RAGLRPVGRLTQAAERVARTDDLRPIPVFGSDELARLTEAFNMMLRALTESRE) is the HAMP domain. Residues 187–515 (RAGLRPVGRL…GKSRSASKEL (329 aa)) lie on the Cytoplasmic side of the membrane. The region spanning 247-467 (DAGHELRTPL…SFYVMLPGRP (221 aa)) is the Histidine kinase domain. The residue at position 250 (His-250) is a Phosphohistidine; by autocatalysis. Positions 468–515 (LTPGGNGTAPVPAAQFDPDMRSAGSRADRRVIKNTETNGKSRSASKEL) are disordered.

Mg(2+) serves as cofactor. It depends on Mn(2+) as a cofactor. Post-translationally, autophosphorylated.

It is found in the cell membrane. It catalyses the reaction ATP + protein L-histidine = ADP + protein N-phospho-L-histidine.. Member of the two-component regulatory system MprB/MprA which contributes to maintaining a balance among several systems involved in stress resistance and is required for establishment and maintenance of persistent infection in the host. In response to environmental signals MprB acts both as a membrane-associated protein kinase that undergoes autophosphorylation and subsequently transfers the phosphate to MprA, and a protein phosphatase that dephosphorylates phospho-MprA. This Mycobacterium sp. (strain JLS) protein is Signal transduction histidine-protein kinase/phosphatase MprB (mprB).